A 156-amino-acid polypeptide reads, in one-letter code: Large ribosomal subunit protein uL15 (156 aa).

Residues 1-16 (MVRRFKRAVKYRRGSR) are compositionally biased toward basic residues. The interval 1–35 (MVRRFKRAVKYRRGSRTHGWGRVGQHRKSGGSGGK) is disordered.

Belongs to the universal ribosomal protein uL15 family. In terms of assembly, part of the 50S ribosomal subunit.

Its function is as follows. Binds to the 23S rRNA. This Pyrobaculum neutrophilum (strain DSM 2338 / JCM 9278 / NBRC 100436 / V24Sta) (Thermoproteus neutrophilus) protein is Large ribosomal subunit protein uL15.